The chain runs to 192 residues: Peptidyl-tRNA hydrolase (192 aa).

TRNA is bound at residue tyrosine 17. Histidine 22 (proton acceptor) is an active-site residue. Residues phenylalanine 68, asparagine 70, and asparagine 116 each contribute to the tRNA site.

The protein belongs to the PTH family. As to quaternary structure, monomer.

The protein localises to the cytoplasm. It catalyses the reaction an N-acyl-L-alpha-aminoacyl-tRNA + H2O = an N-acyl-L-amino acid + a tRNA + H(+). Its function is as follows. Hydrolyzes ribosome-free peptidyl-tRNAs (with 1 or more amino acids incorporated), which drop off the ribosome during protein synthesis, or as a result of ribosome stalling. Functionally, catalyzes the release of premature peptidyl moieties from peptidyl-tRNA molecules trapped in stalled 50S ribosomal subunits, and thus maintains levels of free tRNAs and 50S ribosomes. This is Peptidyl-tRNA hydrolase from Xylella fastidiosa (strain M12).